A 246-amino-acid chain; its full sequence is 5-oxoprolinase subunit A (246 aa).

It belongs to the LamB/PxpA family. As to quaternary structure, forms a complex composed of PxpA, PxpB and PxpC.

It catalyses the reaction 5-oxo-L-proline + ATP + 2 H2O = L-glutamate + ADP + phosphate + H(+). Functionally, catalyzes the cleavage of 5-oxoproline to form L-glutamate coupled to the hydrolysis of ATP to ADP and inorganic phosphate. In Cupriavidus necator (strain ATCC 17699 / DSM 428 / KCTC 22496 / NCIMB 10442 / H16 / Stanier 337) (Ralstonia eutropha), this protein is 5-oxoprolinase subunit A.